The primary structure comprises 510 residues: Flagellin A (510 aa).

The protein belongs to the bacterial flagellin family. In terms of assembly, heteromer of FlaA and FlaB. FlaB is located proximal to the hook while the remainder of the filament is composed of the predominant FlaA.

It localises to the secreted. The protein localises to the bacterial flagellum. In terms of biological role, flagellin is the subunit protein which polymerizes to form the filaments of bacterial flagella. Important for motility and virulence. This Helicobacter pylori (strain ATCC 700392 / 26695) (Campylobacter pylori) protein is Flagellin A (flaA).